Here is a 349-residue protein sequence, read N- to C-terminus: UDP-N-acetylenolpyruvoylglucosamine reductase (349 aa).

Residues 24 to 197 enclose the FAD-binding PCMH-type domain; the sequence is FGIDATARFA…VAVTFRLPKR (174 aa). Residue Arg-173 is part of the active site. The active-site Proton donor is Ser-249. Glu-345 is a catalytic residue.

It belongs to the MurB family. It depends on FAD as a cofactor.

It localises to the cytoplasm. The catalysed reaction is UDP-N-acetyl-alpha-D-muramate + NADP(+) = UDP-N-acetyl-3-O-(1-carboxyvinyl)-alpha-D-glucosamine + NADPH + H(+). The protein operates within cell wall biogenesis; peptidoglycan biosynthesis. Functionally, cell wall formation. This chain is UDP-N-acetylenolpyruvoylglucosamine reductase, found in Burkholderia ambifaria (strain ATCC BAA-244 / DSM 16087 / CCUG 44356 / LMG 19182 / AMMD) (Burkholderia cepacia (strain AMMD)).